Here is a 166-residue protein sequence, read N- to C-terminus: Thiol peroxidase (166 aa).

The Thioredoxin domain occupies 18–164 (VKVGDKAPNF…YEKAIEAAKA (147 aa)). Catalysis depends on Cys-60, which acts as the Cysteine sulfenic acid (-SOH) intermediate. A disulfide bridge links Cys-60 with Cys-94.

The protein belongs to the peroxiredoxin family. Tpx subfamily. Homodimer.

The catalysed reaction is a hydroperoxide + [thioredoxin]-dithiol = an alcohol + [thioredoxin]-disulfide + H2O. Functionally, thiol-specific peroxidase that catalyzes the reduction of hydrogen peroxide and organic hydroperoxides to water and alcohols, respectively. Plays a role in cell protection against oxidative stress by detoxifying peroxides. The polypeptide is Thiol peroxidase (Halalkalibacterium halodurans (strain ATCC BAA-125 / DSM 18197 / FERM 7344 / JCM 9153 / C-125) (Bacillus halodurans)).